The sequence spans 335 residues: Tetraacyldisaccharide 4'-kinase (335 aa).

Thr58–Thr65 serves as a coordination point for ATP.

This sequence belongs to the LpxK family.

The enzyme catalyses a lipid A disaccharide + ATP = a lipid IVA + ADP + H(+). Its pathway is glycolipid biosynthesis; lipid IV(A) biosynthesis; lipid IV(A) from (3R)-3-hydroxytetradecanoyl-[acyl-carrier-protein] and UDP-N-acetyl-alpha-D-glucosamine: step 6/6. Functionally, transfers the gamma-phosphate of ATP to the 4'-position of a tetraacyldisaccharide 1-phosphate intermediate (termed DS-1-P) to form tetraacyldisaccharide 1,4'-bis-phosphate (lipid IVA). The chain is Tetraacyldisaccharide 4'-kinase from Shewanella frigidimarina (strain NCIMB 400).